A 71-amino-acid polypeptide reads, in one-letter code: SRY-related protein LG27 (71 aa).

A DNA-binding region (HMG box) is located at residues 1–68 (VKRPMNAFMV…KHMADYPNYK (68 aa)).

It localises to the nucleus. This chain is SRY-related protein LG27, found in Eublepharis macularius (Leopard gecko).